The following is a 303-amino-acid chain: Probable alpha-L-glutamate ligase (303 aa).

An ATP-grasp domain is found at 104-287 (LQLLAREGID…IAGMMIEFIE (184 aa)). ATP-binding positions include Lys141, 178 to 179 (EY), Asp187, and 211 to 213 (RSN). 3 residues coordinate Mg(2+): Asp248, Glu260, and Asn262. Asp248, Glu260, and Asn262 together coordinate Mn(2+).

Belongs to the RimK family. Mg(2+) serves as cofactor. Requires Mn(2+) as cofactor.

The sequence is that of Probable alpha-L-glutamate ligase from Pectobacterium carotovorum subsp. carotovorum (strain PC1).